The primary structure comprises 220 residues: Ribose-5-phosphate isomerase A (220 aa).

Residues 28 to 31 (TGST), 81 to 84 (DGAD), and 94 to 97 (KGGG) each bind substrate. E103 (proton acceptor) is an active-site residue. K121 contacts substrate.

The protein belongs to the ribose 5-phosphate isomerase family. In terms of assembly, homodimer.

The enzyme catalyses aldehydo-D-ribose 5-phosphate = D-ribulose 5-phosphate. Its pathway is carbohydrate degradation; pentose phosphate pathway; D-ribose 5-phosphate from D-ribulose 5-phosphate (non-oxidative stage): step 1/1. Catalyzes the reversible conversion of ribose-5-phosphate to ribulose 5-phosphate. This chain is Ribose-5-phosphate isomerase A, found in Leptothrix cholodnii (strain ATCC 51168 / LMG 8142 / SP-6) (Leptothrix discophora (strain SP-6)).